We begin with the raw amino-acid sequence, 279 residues long: MKNNPLISIYMPTWNRQQLAIRAIKSVLRQDYSNWEMIIVDDCSTSWEQLQQYVTALNDPRITYIHNDINSGACAVRNQAIMLAQGEYITGIDDDDEWTPNRLSVFLAHKQQLVTHAFLYANDYVCQGEVYSQPASLPLYPKSPYSRRLFYKRNIIGNQVFTWAWRFKECLFDTELKAAQDYDIFLRMVVEYGEPWKVEEATQILHINHGEMQITSSPKKFSGYFHFYRKHKDKFDRASKKYQLFTLYQIRNKRMTWRTLLTLLSVRNGKRLADGIRGR.

This sequence to R.meliloti ExoO.

Its pathway is slime biogenesis; slime polysaccharide biosynthesis. This is Putative colanic acid biosynthesis glycosyl transferase WcaA (wcaA) from Escherichia coli (strain K12).